A 221-amino-acid chain; its full sequence is Deoxyribose-phosphate aldolase 1 (221 aa).

Aspartate 89 acts as the Proton donor/acceptor in catalysis. The active-site Schiff-base intermediate with acetaldehyde is lysine 152. Lysine 181 serves as the catalytic Proton donor/acceptor.

It belongs to the DeoC/FbaB aldolase family. DeoC type 1 subfamily.

The protein resides in the cytoplasm. It catalyses the reaction 2-deoxy-D-ribose 5-phosphate = D-glyceraldehyde 3-phosphate + acetaldehyde. It participates in carbohydrate degradation; 2-deoxy-D-ribose 1-phosphate degradation; D-glyceraldehyde 3-phosphate and acetaldehyde from 2-deoxy-alpha-D-ribose 1-phosphate: step 2/2. Its function is as follows. Catalyzes a reversible aldol reaction between acetaldehyde and D-glyceraldehyde 3-phosphate to generate 2-deoxy-D-ribose 5-phosphate. In Oceanobacillus iheyensis (strain DSM 14371 / CIP 107618 / JCM 11309 / KCTC 3954 / HTE831), this protein is Deoxyribose-phosphate aldolase 1.